Consider the following 194-residue polypeptide: Threonylcarbamoyl-AMP synthase (194 aa).

Positions 12 to 194 (SPNMKDLLIQ…DVMTGKLIRE (183 aa)) constitute a YrdC-like domain.

It belongs to the SUA5 family. TsaC subfamily.

It is found in the cytoplasm. The enzyme catalyses L-threonine + hydrogencarbonate + ATP = L-threonylcarbamoyladenylate + diphosphate + H2O. In terms of biological role, required for the formation of a threonylcarbamoyl group on adenosine at position 37 (t(6)A37) in tRNAs that read codons beginning with adenine. Catalyzes the conversion of L-threonine, HCO(3)(-)/CO(2) and ATP to give threonylcarbamoyl-AMP (TC-AMP) as the acyladenylate intermediate, with the release of diphosphate. The protein is Threonylcarbamoyl-AMP synthase of Blochmanniella pennsylvanica (strain BPEN).